Consider the following 637-residue polypeptide: Serine protease Hayan (637 aa).

The N-terminal stretch at 1–26 (MAMISARRYFLLGLLVLTTSAYVTVG) is a signal peptide. The Clip domain occupies 31–79 (PCQVRSDIPGICLSSSACENIRGYLKSGTLSTSQVPSCGFGAREEIICC). Cystine bridges form between cysteine 32-cysteine 78, cysteine 42-cysteine 68, and cysteine 48-cysteine 79. Disordered regions lie at residues 95-137 (FHAT…LDEN), 152-178 (KPQK…SMKM), 216-260 (QRSF…NNNN), and 286-365 (LQTT…EKER). Residues 125-136 (EGKRERESRLDE) are compositionally biased toward basic and acidic residues. Residues 234-244 (PLTTPRSRPQR) show a composition bias toward polar residues. Over residues 245–260 (PNNSNFNTNPSPNNNN) the composition is skewed to low complexity. Basic and acidic residues predominate over residues 306 to 320 (EPYRFRGQDRDKDTQ). Over residues 321–332 (PQEPWNDVSNNL) the composition is skewed to polar residues. Intrachain disulfides connect cysteine 371–cysteine 497, cysteine 414–cysteine 430, cysteine 543–cysteine 567, and cysteine 578–cysteine 609. Residues 385–632 (ILDGERVDRG…FLDYIEGIVW (248 aa)) enclose the Peptidase S1 domain. Residues histidine 429 and aspartate 477 each act as charge relay system in the active site. Serine 582 functions as the Charge relay system in the catalytic mechanism.

This sequence belongs to the peptidase S1 family. CLIP subfamily.

It is found in the secreted. Serine protease which, by converting prophenoloxidase 1 (PPO1) into its active form, plays an essential role in the melanization immune response to physical or septic wounding. May function in diverse PPO1-activating cascades that are negatively controlled by different serpin proteins; Spn27A and Spn28D in the hemolymph, and Spn28D and Spn77BA in the trachea. Also required in the systematic wound response by mediating the redox-dependent activation of the JNK cytoprotective cascade in neuronal tissues after integument wounding. In Drosophila melanogaster (Fruit fly), this protein is Serine protease Hayan.